The sequence spans 65 residues: Large ribosomal subunit protein bL35 (65 aa).

It belongs to the bacterial ribosomal protein bL35 family.

The polypeptide is Large ribosomal subunit protein bL35 (Prochlorococcus marinus (strain NATL1A)).